A 430-amino-acid polypeptide reads, in one-letter code: Adenylosuccinate synthetase (430 aa).

GTP-binding positions include 12 to 18 and 40 to 42; these read GDEGKGK and GHT. Asp13 functions as the Proton acceptor in the catalytic mechanism. Asp13 and Gly40 together coordinate Mg(2+). Residues 13-16, 38-41, Thr128, Arg142, Gln223, Thr238, and Arg302 contribute to the IMP site; these read DEGK and NAGH. The Proton donor role is filled by His41. 298–304 is a substrate binding site; that stretch reads TTTGRPR. Residues Arg304, 330–332, and 412–414 contribute to the GTP site; these read SID and SVG.

It belongs to the adenylosuccinate synthetase family. Homodimer. Mg(2+) serves as cofactor.

The protein localises to the cytoplasm. The enzyme catalyses IMP + L-aspartate + GTP = N(6)-(1,2-dicarboxyethyl)-AMP + GDP + phosphate + 2 H(+). It participates in purine metabolism; AMP biosynthesis via de novo pathway; AMP from IMP: step 1/2. In terms of biological role, plays an important role in the de novo pathway of purine nucleotide biosynthesis. Catalyzes the first committed step in the biosynthesis of AMP from IMP. The polypeptide is Adenylosuccinate synthetase (Streptococcus pyogenes serotype M12 (strain MGAS9429)).